The sequence spans 48 residues: Delta-actitoxin-Bcg1b (48 aa).

3 disulfides stabilise this stretch: cysteine 4–cysteine 45, cysteine 6–cysteine 35, and cysteine 28–cysteine 46.

The protein belongs to the sea anemone sodium channel inhibitory toxin family. Type I subfamily.

The protein localises to the secreted. It is found in the nematocyst. Functionally, binds to the sodium channels Nav1.1/SCN1A (EC(50)=165 nM), Nav1.5/SCN5A (EC(50)=103 nM) and Nav1.6/SCN8A (EC(50)=133 nM), thereby delaying their inactivation. Also inhibits Nav1.2/SCN2A, Nav1.3/SCN3A, and Nav1.4/SCN4A, but to a lesser extent. Inhibits Nav1.5 differently from isoforms Nav1.1 and Nav1.6. In Nav1.5 the effect consists in a right-shift of inactivation; whereas in both Nav1.1 and Nav1.6 the effect consists in an incomplete inactivation. The sequence is that of Delta-actitoxin-Bcg1b from Bunodosoma cangicum (Sea anemone).